The chain runs to 464 residues: Chitobiosyldiphosphodolichol beta-mannosyltransferase (464 aa).

Residues methionine 1–alanine 2 lie on the Lumenal side of the membrane. A helical membrane pass occupies residues alanine 3–tryptophan 23. Residues lysine 24 to arginine 99 lie on the Cytoplasmic side of the membrane. Residues valine 100 to tryptophan 120 constitute an intramembrane region (helical). Residues arginine 121–threonine 464 lie on the Cytoplasmic side of the membrane. Residue serine 242 is modified to Phosphoserine. Residues serine 242–threonine 261 are disordered.

This sequence belongs to the glycosyltransferase group 1 family. Glycosyltransferase 33 subfamily.

It is found in the endoplasmic reticulum membrane. The catalysed reaction is an N,N'-diacetylchitobiosyl-diphospho-di-trans,poly-cis-dolichol + GDP-alpha-D-mannose = a beta-D-Man-(1-&gt;4)-beta-D-GlcNAc-(1-&gt;4)-alpha-D-GlcNAc-diphospho-di-trans,poly-cis-dolichol + GDP + H(+). The protein operates within protein modification; protein glycosylation. Functionally, mannosyltransferase that operates in the biosynthetic pathway of dolichol-linked oligosaccharides, the glycan precursors employed in protein asparagine (N)-glycosylation. The assembly of dolichol-linked oligosaccharides begins on the cytosolic side of the endoplasmic reticulum membrane and finishes in its lumen. The sequential addition of sugars to dolichol pyrophosphate produces dolichol-linked oligosaccharides containing fourteen sugars, including two GlcNAcs, nine mannoses and three glucoses. Once assembled, the oligosaccharide is transferred from the lipid to nascent proteins by oligosaccharyltransferases. Catalyzes, on the cytoplasmic face of the endoplasmic reticulum, the addition of the first mannose residues to the dolichol-linked oligosaccharide chain, to produce Man1GlcNAc(2)-PP-dolichol core oligosaccharide. Man1GlcNAc(2)-PP-dolichol is a substrate for ALG2, the following enzyme in the biosynthetic pathway. This is Chitobiosyldiphosphodolichol beta-mannosyltransferase from Pongo abelii (Sumatran orangutan).